Reading from the N-terminus, the 469-residue chain is Ribosomal protein uS12 methylthiotransferase RimO (469 aa).

Positions Thr3–Ala119 constitute an MTTase N-terminal domain. Residues Cys12, Cys48, Cys82, Cys154, Cys158, and Cys161 each coordinate [4Fe-4S] cluster. In terms of domain architecture, Radical SAM core spans Ser140–Ala370. The region spanning Gln373–Ala441 is the TRAM domain. The tract at residues Pro444–Arg469 is disordered. Residues Ala447 to Arg461 are compositionally biased toward low complexity.

Belongs to the methylthiotransferase family. RimO subfamily. It depends on [4Fe-4S] cluster as a cofactor.

The protein resides in the cytoplasm. It catalyses the reaction L-aspartate(89)-[ribosomal protein uS12]-hydrogen + (sulfur carrier)-SH + AH2 + 2 S-adenosyl-L-methionine = 3-methylsulfanyl-L-aspartate(89)-[ribosomal protein uS12]-hydrogen + (sulfur carrier)-H + 5'-deoxyadenosine + L-methionine + A + S-adenosyl-L-homocysteine + 2 H(+). Its function is as follows. Catalyzes the methylthiolation of an aspartic acid residue of ribosomal protein uS12. This chain is Ribosomal protein uS12 methylthiotransferase RimO, found in Anaeromyxobacter sp. (strain K).